The following is a 151-amino-acid chain: MATLEFRLAEMLKVPVEALGFQLWGIEYVQAGKHSTLRVFIDGENGINIEDCANASRQVSAVLDVEDPISTEYTLEVSSPGVDRPLFTAEQYAGYVGEDVKLQLTMPVDGSRNLKGAITAVDGQMLSLKVNGKELVVALDNIRKGNLIAKF.

It belongs to the RimP family.

Its subcellular location is the cytoplasm. Functionally, required for maturation of 30S ribosomal subunits. In Shewanella baltica (strain OS223), this protein is Ribosome maturation factor RimP.